Reading from the N-terminus, the 276-residue chain is Orotidine 5'-phosphate decarboxylase (276 aa).

Lys-96 functions as the Proton donor in the catalytic mechanism.

The protein belongs to the OMP decarboxylase family. Type 2 subfamily.

The catalysed reaction is orotidine 5'-phosphate + H(+) = UMP + CO2. It participates in pyrimidine metabolism; UMP biosynthesis via de novo pathway; UMP from orotate: step 2/2. This chain is Orotidine 5'-phosphate decarboxylase, found in Porphyromonas gingivalis (strain ATCC BAA-308 / W83).